Consider the following 146-residue polypeptide: Hemoglobin subunit beta (146 aa).

An N-acetylvaline modification is found at Val1. Residues His2–His146 form the Globin domain. A Phosphothreonine modification is found at Thr12. Ser44 carries the post-translational modification Phosphoserine. Lys59 is modified (N6-acetyllysine). His63 provides a ligand contact to heme b. An N6-acetyllysine modification is found at Lys82. His92 serves as a coordination point for heme b. Position 93 is an S-nitrosocysteine (Cys93). Residue Lys144 is modified to N6-acetyllysine.

It belongs to the globin family. In terms of assembly, heterotetramer of two alpha chains and two beta chains. Red blood cells.

Functionally, involved in oxygen transport from the lung to the various peripheral tissues. This is Hemoglobin subunit beta (HBB) from Piliocolobus badius (Western red colobus).